The sequence spans 180 residues: Ribulose bisphosphate carboxylase small subunit, chloroplastic 2 (180 aa).

A chloroplast-targeting transit peptide spans 1–54; sequence MASMMSNAAVVGRTTPAQASMVAPFTGLKSVSAFPVTKKSNDITSIASNGGRVQ.

This sequence belongs to the RuBisCO small chain family. As to quaternary structure, heterohexadecamer of 8 large and 8 small subunits.

It localises to the plastid. The protein localises to the chloroplast. Functionally, ruBisCO catalyzes two reactions: the carboxylation of D-ribulose 1,5-bisphosphate, the primary event in carbon dioxide fixation, as well as the oxidative fragmentation of the pentose substrate. Both reactions occur simultaneously and in competition at the same active site. Although the small subunit is not catalytic it is essential for maximal activity. This is Ribulose bisphosphate carboxylase small subunit, chloroplastic 2 from Mesembryanthemum crystallinum (Common ice plant).